A 145-amino-acid polypeptide reads, in one-letter code: Basic phospholipase A2 PC16 (145 aa).

Positions 1–21 are cleaved as a signal peptide; it reads MYPAHLLLLLAVCVSLLGASA. Residues 22–27 constitute a propeptide that is removed on maturation; it reads IPPLPL. 7 cysteine pairs are disulfide-bonded: C38–C98, C54–C144, C56–C72, C71–C125, C78–C118, C87–C111, and C105–C116. Residues Y55, G57, and G59 each coordinate Ca(2+). H75 is a catalytic residue. D76 lines the Ca(2+) pocket. D119 is a catalytic residue.

It belongs to the phospholipase A2 family. Group I subfamily. D49 sub-subfamily. Ca(2+) is required as a cofactor.

It is found in the secreted. It catalyses the reaction a 1,2-diacyl-sn-glycero-3-phosphocholine + H2O = a 1-acyl-sn-glycero-3-phosphocholine + a fatty acid + H(+). Its function is as follows. PLA2 catalyzes the calcium-dependent hydrolysis of the 2-acyl groups in 3-sn-phosphoglycerides. This chain is Basic phospholipase A2 PC16, found in Laticauda laticaudata (Blue-ringed sea krait).